Consider the following 299-residue polypeptide: UPF0276 protein ABO_1518 (299 aa).

It belongs to the UPF0276 family.

This chain is UPF0276 protein ABO_1518, found in Alcanivorax borkumensis (strain ATCC 700651 / DSM 11573 / NCIMB 13689 / SK2).